We begin with the raw amino-acid sequence, 154 residues long: Large ribosomal subunit protein uL13 (154 aa).

Belongs to the universal ribosomal protein uL13 family. Part of the 50S ribosomal subunit.

In terms of biological role, this protein is one of the early assembly proteins of the 50S ribosomal subunit, although it is not seen to bind rRNA by itself. It is important during the early stages of 50S assembly. The polypeptide is Large ribosomal subunit protein uL13 (Sinorhizobium medicae (strain WSM419) (Ensifer medicae)).